Here is a 477-residue protein sequence, read N- to C-terminus: Proline--tRNA ligase (477 aa).

This sequence belongs to the class-II aminoacyl-tRNA synthetase family. ProS type 3 subfamily. In terms of assembly, homodimer.

It is found in the cytoplasm. The enzyme catalyses tRNA(Pro) + L-proline + ATP = L-prolyl-tRNA(Pro) + AMP + diphosphate. Catalyzes the attachment of proline to tRNA(Pro) in a two-step reaction: proline is first activated by ATP to form Pro-AMP and then transferred to the acceptor end of tRNA(Pro). The polypeptide is Proline--tRNA ligase (Methanocorpusculum labreanum (strain ATCC 43576 / DSM 4855 / Z)).